Here is a 294-residue protein sequence, read N- to C-terminus: Cytidine deaminase (294 aa).

CMP/dCMP-type deaminase domains are found at residues 48–168 and 186–294; these read DEDA…FGPK and LTGD…VLLG. Substrate is bound at residue 89 to 91; the sequence is NME. Residue His102 coordinates Zn(2+). The active-site Proton donor is Glu104. 2 residues coordinate Zn(2+): Cys129 and Cys132.

It belongs to the cytidine and deoxycytidylate deaminase family. As to quaternary structure, homodimer. Zn(2+) serves as cofactor.

It carries out the reaction cytidine + H2O + H(+) = uridine + NH4(+). It catalyses the reaction 2'-deoxycytidine + H2O + H(+) = 2'-deoxyuridine + NH4(+). Functionally, this enzyme scavenges exogenous and endogenous cytidine and 2'-deoxycytidine for UMP synthesis. The chain is Cytidine deaminase from Escherichia fergusonii (strain ATCC 35469 / DSM 13698 / CCUG 18766 / IAM 14443 / JCM 21226 / LMG 7866 / NBRC 102419 / NCTC 12128 / CDC 0568-73).